The primary structure comprises 155 residues: Ribosome maturation factor RimP (155 aa).

This sequence belongs to the RimP family.

Its subcellular location is the cytoplasm. Required for maturation of 30S ribosomal subunits. The polypeptide is Ribosome maturation factor RimP (Synechococcus sp. (strain CC9902)).